The following is a 230-amino-acid chain: Voltage-gated hydrogen channel 1 (230 aa).

Residues 1–58 (MAGCLRHFTSVGDDTKKKAWKEEDVEVAHEEEPKNTPHPFIASYSFRGALKWLFSSHK) lie on the Cytoplasmic side of the membrane. A helical transmembrane segment spans residues 59–79 (FQIVIICLVILDALFVLVEVL). Over 80-96 (LDLELLAEKVDHIIPEI) the chain is Extracellular. A helical transmembrane segment spans residues 97–119 (FHYLSISVLSFFILEIAGKLYAF). At 120–127 (RLEFFHHK) the chain is on the cytoplasmic side. The chain crosses the membrane as a helical span at residues 128-148 (FEVFDAAIVVISFIIDIVYIS). The Extracellular segment spans residues 149-155 (REDIFNA). Residues 156 to 176 (VGLLILLRLWRVARIVNGIIV) traverse the membrane as a helical segment. Positions 177–226 (SVKTQAEDKIHRLKENQESLLEKVAHLEQQCAQQEQEIVRLQTLLQQHNV) form a coiled coil. Residues 177-230 (SVKTQAEDKIHRLKENQESLLEKVAHLEQQCAQQEQEIVRLQTLLQQHNVFPAS) are Cytoplasmic-facing.

The protein belongs to the hydrogen channel family. Homodimer.

It localises to the membrane. The protein resides in the cell membrane. In terms of biological role, mediates the voltage-dependent proton permeability of excitable membranes. Forms a proton-selective channel through which protons may pass in accordance with their electrochemical gradient. The protein is Voltage-gated hydrogen channel 1 (hvcn1) of Xenopus tropicalis (Western clawed frog).